Here is a 419-residue protein sequence, read N- to C-terminus: Serine hydroxymethyltransferase (419 aa).

(6S)-5,6,7,8-tetrahydrofolate contacts are provided by residues Leu118 and 122-124 (GHL). At Lys227 the chain carries N6-(pyridoxal phosphate)lysine.

This sequence belongs to the SHMT family. In terms of assembly, homodimer. The cofactor is pyridoxal 5'-phosphate.

It is found in the cytoplasm. It carries out the reaction (6R)-5,10-methylene-5,6,7,8-tetrahydrofolate + glycine + H2O = (6S)-5,6,7,8-tetrahydrofolate + L-serine. It functions in the pathway one-carbon metabolism; tetrahydrofolate interconversion. The protein operates within amino-acid biosynthesis; glycine biosynthesis; glycine from L-serine: step 1/1. Functionally, catalyzes the reversible interconversion of serine and glycine with tetrahydrofolate (THF) serving as the one-carbon carrier. This reaction serves as the major source of one-carbon groups required for the biosynthesis of purines, thymidylate, methionine, and other important biomolecules. Also exhibits THF-independent aldolase activity toward beta-hydroxyamino acids, producing glycine and aldehydes, via a retro-aldol mechanism. This Chloroflexus aurantiacus (strain ATCC 29364 / DSM 637 / Y-400-fl) protein is Serine hydroxymethyltransferase.